We begin with the raw amino-acid sequence, 846 residues long: DNA mismatch repair protein MutS (846 aa).

Residue 610–617 coordinates ATP; the sequence is GPNMGGKS.

The protein belongs to the DNA mismatch repair MutS family.

Functionally, this protein is involved in the repair of mismatches in DNA. It is possible that it carries out the mismatch recognition step. This protein has a weak ATPase activity. The sequence is that of DNA mismatch repair protein MutS from Legionella pneumophila (strain Corby).